A 190-amino-acid chain; its full sequence is MTVRLLLASASPRRRELLSQIGVAFEVKPSAFEERMDPALPPEQLVVQNALGKALNVQKRAPAELILGADTVVVFNRRIYGKPTGPADAGRMLGELQGQWHTVYTGIALVEERRWRVAERATRVKLRAMTPAQIAAYVAGGEPLDKAGSYAIQGLGAALVEQIDGCYSNVVGLSLPLLVDLLAEFDRRVF.

Asp-70 (proton acceptor) is an active-site residue.

The protein belongs to the Maf family. YhdE subfamily. A divalent metal cation is required as a cofactor.

The protein resides in the cytoplasm. The catalysed reaction is dTTP + H2O = dTMP + diphosphate + H(+). The enzyme catalyses UTP + H2O = UMP + diphosphate + H(+). Its function is as follows. Nucleoside triphosphate pyrophosphatase that hydrolyzes dTTP and UTP. May have a dual role in cell division arrest and in preventing the incorporation of modified nucleotides into cellular nucleic acids. The polypeptide is dTTP/UTP pyrophosphatase (Gloeobacter violaceus (strain ATCC 29082 / PCC 7421)).